The chain runs to 299 residues: Adenylate kinase (299 aa).

The interval 1 to 30 (MATTTTRGARDSPFPAPSEGEIKKELNMKG) is disordered. Residue 85 to 90 (GAGKGT) participates in ATP binding. An NMP region spans residues 107–136 (ATGDMLREQVSKQTELGKMAKKIMDQGGLV). AMP-binding positions include T108, R113, 134-136 (GLV), 163-166 (GFPR), and Q170. The tract at residues 204–241 (GRLVHPASGRSYHKEFSPPKKPMTDDVTGEPLIQRSDD) is LID. Residues R205 and 214–215 (SY) each bind ATP. A disordered region spans residues 212–237 (GRSYHKEFSPPKKPMTDDVTGEPLIQ). Positions 215-227 (YHKEFSPPKKPMT) are enriched in basic and acidic residues. 2 residues coordinate AMP: R238 and R249. Q277 contributes to the ATP binding site.

This sequence belongs to the adenylate kinase family. AK2 subfamily. As to quaternary structure, monomer.

Its subcellular location is the cytoplasm. The protein resides in the cytosol. The protein localises to the mitochondrion intermembrane space. The catalysed reaction is AMP + ATP = 2 ADP. In terms of biological role, catalyzes the reversible transfer of the terminal phosphate group between ATP and AMP. Plays an important role in cellular energy homeostasis and in adenine nucleotide metabolism. Adenylate kinase activity is critical for regulation of the phosphate utilization and the AMP de novo biosynthesis pathways. In Mycosarcoma maydis (Corn smut fungus), this protein is Adenylate kinase.